The sequence spans 556 residues: Arginine--tRNA ligase (556 aa).

The 'HIGH' region signature appears at 132–142; sequence VNPTGDLHLGH.

The protein belongs to the class-I aminoacyl-tRNA synthetase family. As to quaternary structure, monomer.

It is found in the cytoplasm. The catalysed reaction is tRNA(Arg) + L-arginine + ATP = L-arginyl-tRNA(Arg) + AMP + diphosphate. In Oceanobacillus iheyensis (strain DSM 14371 / CIP 107618 / JCM 11309 / KCTC 3954 / HTE831), this protein is Arginine--tRNA ligase.